The sequence spans 749 residues: Disintegrin and metalloproteinase domain-containing protein 10 (749 aa).

The signal sequence occupies residues 1 to 18 (MGLLRLVFLLSWAASAGG). Positions 19–213 (LYGNPLNKYI…SGPVILRKKR (195 aa)) are excised as a propeptide. Over 19 to 673 (LYGNPLNKYI…NPELYENIAE (655 aa)) the chain is Extracellular. The short motif at 170–177 (GGCADSSV) is the Cysteine switch element. C172 lines the Zn(2+) pocket. The Peptidase M12B domain occupies 220–457 (NTCQLFIQTD…KENSCFVESG (238 aa)). Intrachain disulfides connect C222-C314, C345-C452, C400-C436, C461-C496, C472-C485, C474-C480, C484-C516, C504-C512, C511-C537, C525-C544, C531-C563, C556-C568, C573-C599, C581-C608, C583-C598, C595-C640, and C633-C646. Residues N268 and N279 are each glycosylated (N-linked (GlcNAc...) asparagine). A Zn(2+)-binding site is contributed by H384. Residue E385 is part of the active site. H388 and H394 together coordinate Zn(2+). An N-linked (GlcNAc...) asparagine glycan is attached at N440. The Disintegrin domain occupies 458–552 (QPICGNGLVE…QCPPSEPREN (95 aa)). A glycan (N-linked (GlcNAc...) asparagine) is linked at N552. A helical transmembrane segment spans residues 674-694 (WIVAHWWAVLLMGIALIMLMA). Topologically, residues 695-749 (GFIKICSVHTPSSNPKLPPPKPLPGTLKRRRPPQTTQQPSRQRPRENYQMGHMRH) are cytoplasmic. The tract at residues 705–749 (PSSNPKLPPPKPLPGTLKRRRPPQTTQQPSRQRPRENYQMGHMRH) is disordered. Residues 709–716 (PKLPPPKP) carry the SH3-binding motif. T720 is modified (phosphothreonine). An SH3-binding motif is present at residues 723-729 (RRRPPQT).

Requires Zn(2+) as cofactor. The precursor is cleaved by furin and PCSK7.

It localises to the membrane. It carries out the reaction Endopeptidase of broad specificity.. In terms of biological role, controls the proteolytic processing of Notch and mediates lateral inhibition during neurogenesis. The sequence is that of Disintegrin and metalloproteinase domain-containing protein 10 (adam10) from Xenopus laevis (African clawed frog).